We begin with the raw amino-acid sequence, 610 residues long: MARMSTNSTTPLSHIRNFSIVAHIDHGKSTLADRLIQTTGGLAEREMSEQVLDNMDIERERGITIKAQTVRLHYQANNGEKYILNLIDTPGHVDFAYEVSRSLSACEGSLLVVDASQGVEAQTLANVYQAIDNNHEIVTVLNKIDLPAAEPDRIKEQIEEVIGIDASEAVLISAKTGLGIPDVLEAIVHKLPAPKSPGGDKAPLKALLVDSWYDAYLGVMVLVRVIDGVLTKGQTVRMMGTDAKYQVERVGVLTPKMVNIDRLGPGEIGFITASIKEVADTRVGDTITEDKRPTAQALPGFKPAQPVVFCGLFPVDAADFEDLRAAMGKLRLNDASFSFEMESSAALGFGFRCGFLGLLHLEIIQERLEREFDLDLIATAPSVVYKMFMTDGTERELHNPADMPDVVKISEIHEPWIRATILTPDDYLGGILKLCQDRRGIQIELTYVGTRAMLTYDLPLNEVVFDFYDRLKSISKGYASFDYTLTDHREGNLVKMSILVNGEPVDALSMMVHRTAAEKRGRDMCEKLKELIPKHMFKIPIQAAIGGNVIARETISALRKDVTAKCYGGDATRKRKLLDKQKAGKKRMRQFGKVEIPQEAFIAALKMGDE.

Positions 13-195 (SHIRNFSIVA…AIVHKLPAPK (183 aa)) constitute a tr-type G domain. GTP-binding positions include 25–30 (DHGKST) and 142–145 (NKID).

The protein belongs to the TRAFAC class translation factor GTPase superfamily. Classic translation factor GTPase family. LepA subfamily.

The protein resides in the cell inner membrane. The catalysed reaction is GTP + H2O = GDP + phosphate + H(+). Its function is as follows. Required for accurate and efficient protein synthesis under certain stress conditions. May act as a fidelity factor of the translation reaction, by catalyzing a one-codon backward translocation of tRNAs on improperly translocated ribosomes. Back-translocation proceeds from a post-translocation (POST) complex to a pre-translocation (PRE) complex, thus giving elongation factor G a second chance to translocate the tRNAs correctly. Binds to ribosomes in a GTP-dependent manner. This Rhizobium johnstonii (strain DSM 114642 / LMG 32736 / 3841) (Rhizobium leguminosarum bv. viciae) protein is Elongation factor 4.